The primary structure comprises 328 residues: Cytochrome c biogenesis protein CcsA (328 aa).

Helical transmembrane passes span His-12–Gly-32, Gly-45–Gly-65, Leu-72–Leu-92, Phe-100–Leu-120, Met-145–Ile-165, Thr-234–Asn-254, Trp-263–Ile-283, and Ile-296–Gly-316.

This sequence belongs to the CcmF/CycK/Ccl1/NrfE/CcsA family. In terms of assembly, may interact with Ccs1.

Its subcellular location is the plastid. The protein localises to the chloroplast thylakoid membrane. Required during biogenesis of c-type cytochromes (cytochrome c6 and cytochrome f) at the step of heme attachment. The chain is Cytochrome c biogenesis protein CcsA from Phaseolus vulgaris (Kidney bean).